The following is a 392-amino-acid chain: Putative pectate lyase 21 (392 aa).

The first 21 residues, 1 to 21, serve as a signal peptide directing secretion; sequence MSIVCTFFLFLLNTSFAFAFA. Asn-38 is a glycosylation site (N-linked (GlcNAc...) asparagine). Residues Asp-189, Asp-213, and Asp-217 each contribute to the Ca(2+) site. An N-linked (GlcNAc...) asparagine glycan is attached at Asn-220. Residue Arg-269 is part of the active site.

This sequence belongs to the polysaccharide lyase 1 family. Ca(2+) is required as a cofactor.

The enzyme catalyses Eliminative cleavage of (1-&gt;4)-alpha-D-galacturonan to give oligosaccharides with 4-deoxy-alpha-D-galact-4-enuronosyl groups at their non-reducing ends.. The protein operates within glycan metabolism; pectin degradation; 2-dehydro-3-deoxy-D-gluconate from pectin: step 2/5. The protein is Putative pectate lyase 21 of Arabidopsis thaliana (Mouse-ear cress).